Here is a 465-residue protein sequence, read N- to C-terminus: Mothers against decapentaplegic homolog 5 (465 aa).

Position 2 is an N-acetylthreonine (threonine 2). The MH1 domain maps to 13 to 137 (PAVKRLLGWK…YKRVESPVLP (125 aa)). Residues cysteine 65, cysteine 110, cysteine 122, and histidine 127 each contribute to the Zn(2+) site. The disordered stretch occupies residues 163-243 (NEPHMPQNAT…GQDNSQPMDT (81 aa)). Positions 169-182 (QNATFPDSFHQPNS) are enriched in polar residues. The segment covering 186–197 (PLSPNSPYPPSP) has biased composition (pro residues). Residues 198-214 (ASSTYPNSPASSGPGSP) are compositionally biased toward low complexity. The span at 234-243 (GQDNSQPMDT) shows a compositional bias: polar residues. An MH2 domain is found at 271–465 (WCSIVYYELN…SPLNPISSVS (195 aa)). Residues serine 463 and serine 465 each carry the phosphoserine modification.

This sequence belongs to the dwarfin/SMAD family. Homodimer. Forms trimers with the co-SMAD SMAD4. Interacts with PEBP2-alpha subunit and SMURF1. Interacts with SUV39H1 and SUV39H2. Interacts (via MH2 domain) with LEMD3. Interacts with WWP1. Interacts with TMEM119. Interacts with ZNF8. Interacts with RANBP3L. Interacts with HK1. Interacts with HGS; this interaction attenuates BMP signaling. Phosphorylated on serine by BMP (bone morphogenetic proteins) type 1 receptor kinase. Post-translationally, ubiquitin-mediated proteolysis by SMAD-specific E3 ubiquitin ligase SMURF1.

Its subcellular location is the cytoplasm. It localises to the nucleus. The protein localises to the mitochondrion. In terms of biological role, transcriptional regulator that plays a role in various cellular processes including embryonic development, cell differentiation, angiogenesis and tissue homeostasis. Upon BMP ligand binding to their receptors at the cell surface, is phosphorylated by activated type I BMP receptors (BMPRIs) and associates with SMAD4 to form a heteromeric complex which translocates into the nucleus acting as transcription factor. In turn, the hetero-trimeric complex recognizes cis-regulatory elements containing Smad Binding Elements (SBEs) to modulate the outcome of the signaling network. Non-phosphorylated SMAD5 has a cytoplasmic role in energy metabolism regulation by promoting mitochondrial respiration and glycolysis in response to cytoplasmic pH changes. Mechanistically, interacts with hexokinase 1/HK1 and thereby accelerates glycolysis. The polypeptide is Mothers against decapentaplegic homolog 5 (Smad5) (Rattus norvegicus (Rat)).